The sequence spans 352 residues: Anthranilate phosphoribosyltransferase (352 aa).

5-phospho-alpha-D-ribose 1-diphosphate-binding positions include Gly82, 85-86, Ser90, 92-95, 110-118, and Gly122; these read GD, NIST, and KHGNRAVTG. Gly82 contributes to the anthranilate binding site. Ser94 is a binding site for Mg(2+). Anthranilate is bound at residue Asn113. Arg168 contributes to the anthranilate binding site. Positions 232 and 233 each coordinate Mg(2+).

Belongs to the anthranilate phosphoribosyltransferase family. In terms of assembly, homodimer. Requires Mg(2+) as cofactor.

The enzyme catalyses N-(5-phospho-beta-D-ribosyl)anthranilate + diphosphate = 5-phospho-alpha-D-ribose 1-diphosphate + anthranilate. It participates in amino-acid biosynthesis; L-tryptophan biosynthesis; L-tryptophan from chorismate: step 2/5. Catalyzes the transfer of the phosphoribosyl group of 5-phosphorylribose-1-pyrophosphate (PRPP) to anthranilate to yield N-(5'-phosphoribosyl)-anthranilate (PRA). The sequence is that of Anthranilate phosphoribosyltransferase from Methanothermobacter thermautotrophicus (strain ATCC 29096 / DSM 1053 / JCM 10044 / NBRC 100330 / Delta H) (Methanobacterium thermoautotrophicum).